A 616-amino-acid polypeptide reads, in one-letter code: Large ribosomal subunit assembly factor BipA (616 aa).

In terms of domain architecture, tr-type G spans 8–204; that stretch reads KKLRNIAIIA…AIVKHVEPPK (197 aa). GTP is bound by residues 20-25 and 134-137; these read DHGKTT and NKVD.

This sequence belongs to the TRAFAC class translation factor GTPase superfamily. Classic translation factor GTPase family. BipA subfamily. As to quaternary structure, monomer.

The protein localises to the cytoplasm. It catalyses the reaction GTP + H2O = GDP + phosphate + H(+). Functionally, a 50S ribosomal subunit assembly protein with GTPase activity, required for 50S subunit assembly at low temperatures, may also play a role in translation. Binds GTP and analogs. Binds the 70S ribosome between the 30S and 50S subunits, in a similar position as ribosome-bound EF-G; it contacts a number of ribosomal proteins, both rRNAs and the A-site tRNA. This chain is Large ribosomal subunit assembly factor BipA, found in Haemophilus influenzae (strain ATCC 51907 / DSM 11121 / KW20 / Rd).